We begin with the raw amino-acid sequence, 495 residues long: Ectonucleoside triphosphate diphosphohydrolase 8 (495 aa).

The Cytoplasmic segment spans residues 1–8 (MGLSRKEQ). The helical transmembrane segment at 9-29 (VFLALLGASGVSGLTALILLL) threads the bilayer. The Extracellular portion of the chain corresponds to 30–471 (VEATSVLLPT…AESYGVWVAK (442 aa)). The N-linked (GlcNAc...) asparagine glycan is linked to Asn67. A disulfide bridge links Cys78 with Cys102. The active-site Proton acceptor is the Glu168. A disulfide bridge connects residues Cys246 and Cys292. Asn304 is a glycosylation site (N-linked (GlcNAc...) asparagine). An intrachain disulfide couples Cys329 to Cys335. Asn363 carries N-linked (GlcNAc...) asparagine glycosylation. A disulfide bond links Cys381 and Cys403. The helical transmembrane segment at 472-492 (VVFMVLALVAVVGAALVQLFW) threads the bilayer. The Cytoplasmic portion of the chain corresponds to 493 to 495 (LQD).

This sequence belongs to the GDA1/CD39 NTPase family. It depends on Ca(2+) as a cofactor. The cofactor is Mg(2+). In terms of processing, N-glycosylated.

The protein localises to the cell membrane. It carries out the reaction a ribonucleoside 5'-triphosphate + 2 H2O = a ribonucleoside 5'-phosphate + 2 phosphate + 2 H(+). With respect to regulation, not inhibited by ARL 67156. In terms of biological role, canalicular ectonucleoside NTPDase responsible for the main hepatic NTPDase activity. Ectonucleoside NTPDases catalyze the hydrolysis of gamma- and beta-phosphate residues of nucleotides, playing a central role in concentration of extracellular nucleotides. Has activity toward ATP, ADP, UTP and UDP, but not toward AMP. This Homo sapiens (Human) protein is Ectonucleoside triphosphate diphosphohydrolase 8 (ENTPD8).